Here is a 450-residue protein sequence, read N- to C-terminus: Na(+)/H(+) antiporter NhaA 2 (450 aa).

Helical transmembrane passes span 43 to 63, 86 to 106, 124 to 144, 155 to 175, 185 to 205, 208 to 228, 234 to 254, 258 to 278, 299 to 319, 326 to 346, 364 to 384, and 398 to 418; these read VGGA…NSPW, LTLG…VVGL, ALPM…FVAV, GWAI…AVIS, FLLT…AVFY, EINL…ALCV, SWWL…ESGV, VAGV…AGGP, VAVP…VSGL, PITL…IFLT, WIDV…SLLI, and FVKV…AVLL.

It belongs to the NhaA Na(+)/H(+) (TC 2.A.33) antiporter family.

It localises to the cell membrane. It catalyses the reaction Na(+)(in) + 2 H(+)(out) = Na(+)(out) + 2 H(+)(in). Functionally, na(+)/H(+) antiporter that extrudes sodium in exchange for external protons. This Mycobacterium sp. (strain JLS) protein is Na(+)/H(+) antiporter NhaA 2.